We begin with the raw amino-acid sequence, 598 residues long: Membrane protein insertase YidC (598 aa).

Residues 7-27 traverse the membrane as a helical segment; sequence NYFIAIALSVLIVLGWQFLYM. Residues 37 to 71 are disordered; it reads AQEAQKAQQQTEQVQQPAAGGATPAPASGTAPSGQ. A compositionally biased stretch (low complexity) spans 40 to 71; the sequence is AQKAQQQTEQVQQPAAGGATPAPASGTAPSGQ. 4 consecutive transmembrane segments (helical) span residues 373 to 393, 447 to 467, 492 to 512, and 538 to 558; these read FFGN…ALFF, WPVA…YITI, LFGL…WPLI, and WMPL…VIYW.

Belongs to the OXA1/ALB3/YidC family. Type 1 subfamily. Interacts with the Sec translocase complex via SecD. Specifically interacts with transmembrane segments of nascent integral membrane proteins during membrane integration.

Its subcellular location is the cell inner membrane. In terms of biological role, required for the insertion and/or proper folding and/or complex formation of integral membrane proteins into the membrane. Involved in integration of membrane proteins that insert both dependently and independently of the Sec translocase complex, as well as at least some lipoproteins. Aids folding of multispanning membrane proteins. The sequence is that of Membrane protein insertase YidC from Rhizobium etli (strain CIAT 652).